The following is an 83-amino-acid chain: Conotoxin LiCr95 (83 aa).

Positions 1–22 are cleaved as a signal peptide; that stretch reads MKLTCALIVAMLFLTACQLTTT. Positions 23–50 are excised as a propeptide; that stretch reads DDSRGRQKYPTERLRVKMRNPKLSKLTK. 3 disulfide bridges follow: Cys52–Cys67, Cys59–Cys71, and Cys66–Cys80.

It belongs to the conotoxin O1 superfamily. Expressed by the venom duct.

The protein resides in the secreted. The chain is Conotoxin LiCr95 from Conus lividus (Livid cone).